A 341-amino-acid polypeptide reads, in one-letter code: Anthranilate phosphoribosyltransferase (341 aa).

5-phospho-alpha-D-ribose 1-diphosphate is bound by residues glycine 82, 85–86 (GD), threonine 90, 92–95 (NIST), 110–118 (KHGGRSVSS), and serine 122. Position 82 (glycine 82) interacts with anthranilate. Serine 94 lines the Mg(2+) pocket. Residue arginine 168 coordinates anthranilate. 2 residues coordinate Mg(2+): aspartate 227 and glutamate 228.

Belongs to the anthranilate phosphoribosyltransferase family. In terms of assembly, homodimer. Mg(2+) serves as cofactor.

The catalysed reaction is N-(5-phospho-beta-D-ribosyl)anthranilate + diphosphate = 5-phospho-alpha-D-ribose 1-diphosphate + anthranilate. It participates in amino-acid biosynthesis; L-tryptophan biosynthesis; L-tryptophan from chorismate: step 2/5. Its function is as follows. Catalyzes the transfer of the phosphoribosyl group of 5-phosphorylribose-1-pyrophosphate (PRPP) to anthranilate to yield N-(5'-phosphoribosyl)-anthranilate (PRA). This is Anthranilate phosphoribosyltransferase from Nitrosomonas eutropha (strain DSM 101675 / C91 / Nm57).